A 317-amino-acid chain; its full sequence is Taste receptor type 2 member 7 (317 aa).

Over 1-9 (MTDKVQTTL) the chain is Extracellular. A helical transmembrane segment spans residues 10–30 (LFLAIGEFSVGILGNAFIGLV). Residues 31 to 55 (NCMDWVKKRKIASIDLILTSLAISR) lie on the Cytoplasmic side of the membrane. A helical membrane pass occupies residues 56–76 (ICLLCVILLDCFMLVLYPDVY). Topologically, residues 77-94 (ATGKQMRIIDFFWTLTNH) are extracellular. The helical transmembrane segment at 95–115 (LSIWFATCLSIYYFFKIANFF) threads the bilayer. The Cytoplasmic segment spans residues 116 to 128 (HPLFLWMKWRIDR). Residues 129-149 (VISWILLGCMVLSVFINLPAT) traverse the membrane as a helical segment. Residues 150-187 (ENLNADFRRCVKAKRKTNLTWSCRVTKAQHASTKLFLN) are Extracellular-facing. A glycan (N-linked (GlcNAc...) asparagine) is linked at asparagine 167. Residues 188-208 (LVTLLPFSVCLVSFFLLILSL) form a helical membrane-spanning segment. Residues 209-235 (WRHIRRMQLSATGCRDPSTEAHVRALK) lie on the Cytoplasmic side of the membrane. Residues 236 to 256 (AVISFLFLFIAYYLSFLIATS) form a helical membrane-spanning segment. At 257 to 266 (SYFIPETELA) the chain is on the extracellular side. Residues 267–287 (VIFGEFIALIYPSSHSFILIL) traverse the membrane as a helical segment. Over 288 to 317 (GNNKLRRASLKVLWTVMSILKGRKFQQKQI) the chain is Cytoplasmic.

Belongs to the G-protein coupled receptor T2R family.

It localises to the membrane. In terms of biological role, gustducin-coupled receptor implicated in the perception of bitter compounds in the oral cavity and the gastrointestinal tract. Signals through PLCB2 and the calcium-regulated cation channel TRPM5. This chain is Taste receptor type 2 member 7 (TAS2R7), found in Papio hamadryas (Hamadryas baboon).